Reading from the N-terminus, the 205-residue chain is Large ribosomal subunit protein uL3 (205 aa).

A disordered region spans residues 126–150; sequence GGPKTHGQSDRHRAPGSIGSTTTPG.

Belongs to the universal ribosomal protein uL3 family. In terms of assembly, part of the 50S ribosomal subunit. Forms a cluster with proteins L14 and L19.

In terms of biological role, one of the primary rRNA binding proteins, it binds directly near the 3'-end of the 23S rRNA, where it nucleates assembly of the 50S subunit. The sequence is that of Large ribosomal subunit protein uL3 from Dehalococcoides mccartyi (strain ATCC BAA-2100 / JCM 16839 / KCTC 5957 / BAV1).